We begin with the raw amino-acid sequence, 288 residues long: Prohibitin-1, mitochondrial (288 aa).

Over 1-10 the chain is Mitochondrial matrix; sequence MNNVKVPKIP. Residues 11–30 traverse the membrane as a helical; Signal-anchor for type II membrane protein segment; sequence GGGAISTLLKVGIIGGLGLY. Residues 31–288 lie on the Mitochondrial intermembrane side of the membrane; sequence GATHSLYNVE…GMNLDVDAKN (258 aa). A coiled-coil region spans residues 186-219; sequence KEFTAAIEAKQVAAQEAERAKFIVEKAEQDKRSA.

This sequence belongs to the prohibitin family. Component of a prohibitin multimeric complex in mitochondrial membranes. Mostly expressed in proliferative tissues, including vasculature, shoot and root apical tissues.

Its subcellular location is the mitochondrion inner membrane. Its function is as follows. Prohibitin probably acts as a holdase/unfoldase for the stabilization of newly synthesized mitochondrial proteins. The chain is Prohibitin-1, mitochondrial (PHB1) from Arabidopsis thaliana (Mouse-ear cress).